The primary structure comprises 350 residues: C5a anaphylatoxin chemotactic receptor 1 (350 aa).

Residues 1–36 (APMENSTYDYTNYDSLGTLDPSTPVDNTVRRLRPTT) lie on the Extracellular side of the membrane. Asn5 is a glycosylation site (N-linked (GlcNAc...) asparagine). 2 positions are modified to sulfotyrosine: Tyr10 and Tyr13. A helical transmembrane segment spans residues 37–63 (IVALVIYMAVFLVGVPGNALVVWVTAL). Over 64–68 (EAKRT) the chain is Cytoplasmic. Residues 69 to 92 (VNAIWFLNLAVADLLSCLALPILF) form a helical membrane-spanning segment. The Extracellular segment spans residues 93 to 109 (VSIIQEGHWPFGRAACS). Cys108 and Cys187 form a disulfide bridge. The helical transmembrane segment at 110–131 (VLPSLILLNMYASILLLATISA) threads the bilayer. The Cytoplasmic portion of the chain corresponds to 132–152 (DRFLLVFNPIWCQNTRGAGLA). A helical membrane pass occupies residues 153–173 (WLACCVAWGLALLLTIPSFLY). At 174–200 (RKVLQDDYPPKTTCGVDYGHEGVRAER) the chain is on the extracellular side. A helical transmembrane segment spans residues 201 to 226 (AVAIVRLVVGFLLPLFTLSVCYTFLL). Over 227–242 (LRTWSRNGTRSTKTLK) the chain is Cytoplasmic. Residues 243–265 (VVVAVVVSFFIFWLPYQVMGMIL) form a helical membrane-spanning segment. Over 266-282 (ALLHPSSATFRWAIRLD) the chain is Extracellular. A helical membrane pass occupies residues 283–303 (PLCIALAYVNCCINPIIYVVA). Topologically, residues 304-350 (GKGFQGQLRKSLPSLLRNVLAEESVIQGSKSFSRSTVDTVADKCQAV) are cytoplasmic. Residues Ser314, Ser317, Ser327, Ser332, Ser334, and Ser338 each carry the phosphoserine modification.

This sequence belongs to the G-protein coupled receptor 1 family. Homodimer. May also form higher-order oligomers. Interacts (when phosphorylated) with ARRB1 and ARRB2; the interaction is associated with internalization of C5aR. In terms of processing, sulfation plays a critical role in the association of C5aR with C5a, but no significant role in the ability of the receptor to transduce a signal and mobilize calcium in response to a small peptide agonist. Phosphorylated on serine residues in response to C5a binding, resulting in internalization of the receptor and short-term desensitization to C5a.

It is found in the cell membrane. The protein resides in the cytoplasmic vesicle. Its function is as follows. Receptor for the chemotactic and inflammatory peptide anaphylatoxin C5a. The ligand interacts with at least two sites on the receptor: a high-affinity site on the extracellular N-terminus, and a second site in the transmembrane region which activates downstream signaling events. Receptor activation stimulates chemotaxis, granule enzyme release, intracellular calcium release and superoxide anion production. This Oryctolagus cuniculus (Rabbit) protein is C5a anaphylatoxin chemotactic receptor 1 (C5AR1).